The sequence spans 338 residues: Thiosulfate-binding protein (338 aa).

Positions 1–25 (MAVNLLKKNSLALVASLLLAGHVQA) are cleaved as a signal peptide.

The protein belongs to the prokaryotic sulfate-binding protein family. As to quaternary structure, the complex is composed of two ATP-binding proteins (CysA), two transmembrane proteins (CysT and CysW) and a solute-binding protein (CysP).

The protein resides in the periplasm. Part of the ABC transporter complex CysAWTP (TC 3.A.1.6.1) involved in sulfate/thiosulfate import. This protein specifically binds thiosulfate and is involved in its transmembrane transport. This is Thiosulfate-binding protein (cysP) from Escherichia coli (strain K12).